Here is a 210-residue protein sequence, read N- to C-terminus: TM2 domain-containing protein C02F5.13 (210 aa).

A signal peptide spans 1 to 18 (MRRLPWLIPFFLVNISNG). The Extracellular segment spans residues 19–138 (NNEFRIEFEY…PRTFTKSTPC (120 aa)). A glycan (N-linked (GlcNAc...) asparagine) is linked at Asn91. The chain crosses the membrane as a helical span at residues 139–159 (IIYNGHYFLTTLLYSIFLGVV). A TM2 domain is found at 143 to 191 (GHYFLTTLLYSIFLGVVAVDRFCLGYSAMAVGKLMTLGGFGIWWIVDIF). Topologically, residues 160–178 (AVDRFCLGYSAMAVGKLMT) are cytoplasmic. Residues 179-199 (LGGFGIWWIVDIFLLVLGVLG) form a helical membrane-spanning segment. Topologically, residues 200–210 (PADDSSWEPYY) are extracellular.

Belongs to the TM2 family.

It localises to the membrane. This Caenorhabditis elegans protein is TM2 domain-containing protein C02F5.13.